A 105-amino-acid polypeptide reads, in one-letter code: ATP synthase subunit c (105 aa).

Helical transmembrane passes span 3–23 (FLAL…GGMG), 32–52 (SILG…IGMG), and 78–98 (VAMA…IIAI).

This sequence belongs to the ATPase C chain family. F-type ATPases have 2 components, F(1) - the catalytic core - and F(0) - the membrane proton channel. F(1) has five subunits: alpha(3), beta(3), gamma(1), delta(1), epsilon(1). F(0) has three main subunits: a(1), b(2) and c(10-14). The alpha and beta chains form an alternating ring which encloses part of the gamma chain. F(1) is attached to F(0) by a central stalk formed by the gamma and epsilon chains, while a peripheral stalk is formed by the delta and b chains.

The protein localises to the cell inner membrane. In terms of biological role, f(1)F(0) ATP synthase produces ATP from ADP in the presence of a proton or sodium gradient. F-type ATPases consist of two structural domains, F(1) containing the extramembraneous catalytic core and F(0) containing the membrane proton channel, linked together by a central stalk and a peripheral stalk. During catalysis, ATP synthesis in the catalytic domain of F(1) is coupled via a rotary mechanism of the central stalk subunits to proton translocation. Functionally, key component of the F(0) channel; it plays a direct role in translocation across the membrane. A homomeric c-ring of between 10-14 subunits forms the central stalk rotor element with the F(1) delta and epsilon subunits. In Helicobacter pylori (strain P12), this protein is ATP synthase subunit c.